Consider the following 612-residue polypeptide: Dihydroxy-acid dehydratase (612 aa).

Residue aspartate 81 coordinates Mg(2+). Cysteine 122 lines the [2Fe-2S] cluster pocket. Residues aspartate 123 and lysine 124 each coordinate Mg(2+). The residue at position 124 (lysine 124) is an N6-carboxylysine. [2Fe-2S] cluster is bound at residue cysteine 193. Glutamate 489 contributes to the Mg(2+) binding site. Serine 515 serves as the catalytic Proton acceptor.

This sequence belongs to the IlvD/Edd family. In terms of assembly, homodimer. It depends on [2Fe-2S] cluster as a cofactor. Requires Mg(2+) as cofactor.

The enzyme catalyses (2R)-2,3-dihydroxy-3-methylbutanoate = 3-methyl-2-oxobutanoate + H2O. The catalysed reaction is (2R,3R)-2,3-dihydroxy-3-methylpentanoate = (S)-3-methyl-2-oxopentanoate + H2O. It participates in amino-acid biosynthesis; L-isoleucine biosynthesis; L-isoleucine from 2-oxobutanoate: step 3/4. The protein operates within amino-acid biosynthesis; L-valine biosynthesis; L-valine from pyruvate: step 3/4. Functionally, functions in the biosynthesis of branched-chain amino acids. Catalyzes the dehydration of (2R,3R)-2,3-dihydroxy-3-methylpentanoate (2,3-dihydroxy-3-methylvalerate) into 2-oxo-3-methylpentanoate (2-oxo-3-methylvalerate) and of (2R)-2,3-dihydroxy-3-methylbutanoate (2,3-dihydroxyisovalerate) into 2-oxo-3-methylbutanoate (2-oxoisovalerate), the penultimate precursor to L-isoleucine and L-valine, respectively. The protein is Dihydroxy-acid dehydratase of Azotobacter vinelandii (strain DJ / ATCC BAA-1303).